The sequence spans 170 residues: Peptide methionine sulfoxide reductase MsrA (170 aa).

C13 is an active-site residue.

This sequence belongs to the MsrA Met sulfoxide reductase family.

The enzyme catalyses L-methionyl-[protein] + [thioredoxin]-disulfide + H2O = L-methionyl-(S)-S-oxide-[protein] + [thioredoxin]-dithiol. The catalysed reaction is [thioredoxin]-disulfide + L-methionine + H2O = L-methionine (S)-S-oxide + [thioredoxin]-dithiol. In terms of biological role, has an important function as a repair enzyme for proteins that have been inactivated by oxidation. Catalyzes the reversible oxidation-reduction of methionine sulfoxide in proteins to methionine. The sequence is that of Peptide methionine sulfoxide reductase MsrA from Nocardia farcinica (strain IFM 10152).